The primary structure comprises 111 residues: MFKATARYIRVQPRKARLAAGLMRNRSVVEAQQQLSFSQMKAGRCLKKVLDSAIANAESNENIKRENLCVLEVRVDAGPMFKRMKSKSRGGRAPILKRTSHLTVIVGERGQ.

It belongs to the universal ribosomal protein uL22 family. Part of the 50S ribosomal subunit.

In terms of biological role, this protein binds specifically to 23S rRNA; its binding is stimulated by other ribosomal proteins, e.g. L4, L17, and L20. It is important during the early stages of 50S assembly. It makes multiple contacts with different domains of the 23S rRNA in the assembled 50S subunit and ribosome. Functionally, the globular domain of the protein is located near the polypeptide exit tunnel on the outside of the subunit, while an extended beta-hairpin is found that lines the wall of the exit tunnel in the center of the 70S ribosome. The chain is Large ribosomal subunit protein uL22 from Chlamydia trachomatis serovar L2 (strain ATCC VR-902B / DSM 19102 / 434/Bu).